The chain runs to 309 residues: Manganese-dependent inorganic pyrophosphatase (309 aa).

Positions 9, 13, 15, 75, 97, and 149 each coordinate Mn(2+).

As to quaternary structure, homodimer. The cofactor is Mn(2+).

It is found in the cytoplasm. It catalyses the reaction diphosphate + H2O = 2 phosphate + H(+). The polypeptide is Manganese-dependent inorganic pyrophosphatase (ppaC) (Bacillus subtilis (strain 168)).